A 271-amino-acid polypeptide reads, in one-letter code: Interleukin-1 alpha (271 aa).

The propeptide occupies M1–R112. K82 bears the N6-acetyllysine mark. The segment at K82–L86 is nuclear localization signal (NLS). S87 is subject to Phosphoserine. 5 N-linked (GlcNAc...) asparagine glycosylation sites follow: N102, N121, N137, N141, and N211.

The protein belongs to the IL-1 family. In terms of assembly, monomer. Interacts with TMED10; the interaction mediates the translocation from the cytoplasm into the ERGIC (endoplasmic reticulum-Golgi intermediate compartment) and thereby secretion. Interacts with IL1R1. Interacts with S100A13; this interaction is the first step in the export of IL1A, followed by direct translocation of this complex across the plasma membrane. Post-translationally, acetylated within its nuclear localization sequence, which impacts subcellular localization. In terms of processing, proteolytic processed by CAPN1 in a calcium-dependent manner. Cleavage from 31 kDa precursor to 18 kDa biologically active molecules. Phosphorylated. Phosphorylation greatly enhances susceptibility to digestion and promotes the conversion of pre-IL1A alpha to the biologically active IL1A.

It is found in the nucleus. Its subcellular location is the cytoplasm. It localises to the secreted. Functionally, cytokine constitutively present intracellularly in nearly all resting non-hematopoietic cells that plays an important role in inflammation and bridges the innate and adaptive immune systems. After binding to its receptor IL1R1 together with its accessory protein IL1RAP, forms the high affinity interleukin-1 receptor complex. Signaling involves the recruitment of adapter molecules such as MYD88, IRAK1 or IRAK4. In turn, mediates the activation of NF-kappa-B and the three MAPK pathways p38, p42/p44 and JNK pathways. Within the cell, acts as an alarmin and cell death results in its liberation in the extracellular space after disruption of the cell membrane to induce inflammation and alert the host to injury or damage. In addition to its role as a danger signal, which occurs when the cytokine is passively released by cell necrosis, directly senses DNA damage and acts as signal for genotoxic stress without loss of cell integrity. The chain is Interleukin-1 alpha (IL1A) from Macaca mulatta (Rhesus macaque).